The chain runs to 732 residues: Wall-associated receptor kinase 2 (732 aa).

A signal peptide spans 1 to 23 (MKVQEGLFVVAVFYLAYTQLVKG). Residues 24–329 (QPRKECQTRC…RKVRPEYFRW (306 aa)) lie on the Extracellular side of the membrane. Asn-57, Asn-75, Asn-111, Asn-154, Asn-217, and Asn-246 each carry an N-linked (GlcNAc...) asparagine glycan. In terms of domain architecture, EGF-like 1 spans 230-277 (GDKTCKQVEYRGVCGGNSTCFDSTGGTGYNCKCLEGFEGNPYLPNGCQ). Disulfide bonds link Cys-234/Cys-249, Cys-243/Cys-260, Cys-262/Cys-276, Cys-282/Cys-295, Cys-289/Cys-304, and Cys-306/Cys-318. The region spanning 278-319 (DINECISSRHNCSEHSTCENTKGSFNCNCPSGYRKDSLNSCT) is the EGF-like 2; calcium-binding domain. Asn-288 is a glycosylation site (N-linked (GlcNAc...) asparagine). Residues 330–350 (TQIFLGTTIGFSVIMLGISCL) form a helical membrane-spanning segment. Residues 351 to 732 (QQKIKHRKNT…VTTLDIEAGR (382 aa)) lie on the Cytoplasmic side of the membrane. Residue Thr-393 is modified to Phosphothreonine. The 274-residue stretch at 404–677 (YHESRILGQG…KEVAAELEAL (274 aa)) folds into the Protein kinase domain. ATP contacts are provided by residues 410-418 (LGQGGQGTV) and Lys-432. The residue at position 477 (Tyr-477) is a Phosphotyrosine. The active-site Proton acceptor is Asp-529. 2 positions are modified to phosphothreonine: Thr-563 and Thr-568. Tyr-576 is subject to Phosphotyrosine.

It belongs to the protein kinase superfamily. Ser/Thr protein kinase family. As to expression, predominantly expressed in green tissues such as stems and leaves. Detected at organ junctions.

The protein localises to the membrane. The catalysed reaction is L-seryl-[protein] + ATP = O-phospho-L-seryl-[protein] + ADP + H(+). The enzyme catalyses L-threonyl-[protein] + ATP = O-phospho-L-threonyl-[protein] + ADP + H(+). Functionally, serine/threonine-protein kinase that may function as a signaling receptor of extracellular matrix component. Binding to pectin may have significance in the control of cell expansion, morphogenesis and development. This is Wall-associated receptor kinase 2 (WAK2) from Arabidopsis thaliana (Mouse-ear cress).